A 298-amino-acid polypeptide reads, in one-letter code: Ethanolamine ammonia-lyase small subunit (298 aa).

The adenosylcob(III)alamin site is built by Val210, Glu231, and Cys261.

The protein belongs to the EutC family. The basic unit is a heterodimer which dimerizes to form tetramers. The heterotetramers trimerize; 6 large subunits form a core ring with 6 small subunits projecting outwards. Requires adenosylcob(III)alamin as cofactor.

The protein localises to the bacterial microcompartment. It carries out the reaction ethanolamine = acetaldehyde + NH4(+). Its pathway is amine and polyamine degradation; ethanolamine degradation. In terms of biological role, catalyzes the deamination of various vicinal amino-alcohols to oxo compounds. Allows this organism to utilize ethanolamine as the sole source of nitrogen and carbon in the presence of external vitamin B12. The chain is Ethanolamine ammonia-lyase small subunit from Salmonella schwarzengrund (strain CVM19633).